The chain runs to 210 residues: UMP-CMP kinase 3 (210 aa).

34-39 is an ATP binding site; sequence GSGKGT. Positions 54 to 83 are NMP; it reads SAGDLLRAEIKSGSENGTMIENMIKEGKIV. A ribonucleoside 5'-phosphate-binding positions include Arg-60, 81-83, and 108-111; these read KIV and GFPR. Position 115 (Asn-115) interacts with CMP. The LID stretch occupies residues 146 to 154; it reads GRNQGRVDD. Arg-147 is a binding site for ATP. 2 residues coordinate a ribonucleoside 5'-phosphate: Arg-151 and Arg-162. ATP is bound at residue Lys-190.

This sequence belongs to the adenylate kinase family. UMP-CMP kinase subfamily. Monomer. Mg(2+) serves as cofactor.

Its subcellular location is the cytoplasm. The protein localises to the nucleus. The enzyme catalyses UMP + ATP = UDP + ADP. It catalyses the reaction CMP + ATP = CDP + ADP. It carries out the reaction dCMP + ATP = dCDP + ADP. In terms of biological role, catalyzes the phosphorylation of pyrimidine nucleoside monophosphates at the expense of ATP. Plays an important role in de novo pyrimidine nucleotide biosynthesis. Has preference for UMP and CMP as phosphate acceptors. This Oryza sativa subsp. japonica (Rice) protein is UMP-CMP kinase 3 (URA6).